We begin with the raw amino-acid sequence, 3916 residues long: Fusarin C synthetase (3916 aa).

The region spanning 9-440 (KEPIAIIGTS…GTNVHAIIEQ (432 aa)) is the Ketosynthase family 3 (KS3) domain. Active-site for beta-ketoacyl synthase activity residues include Cys-182, His-319, and His-360. Residues 548-869 (VFTGQGAQWP…VTRNIHDVEA (322 aa)) form a malonyl-CoA:ACP transacylase (MAT) domain region. An N-terminal hotdog fold region spans residues 935–1068 (HPLLGARSVE…GQLRVEFSSL (134 aa)). The dehydratase (DH) domain stretch occupies residues 935 to 1228 (HPLLGARSVE…GLTCTSLLRP (294 aa)). The region spanning 935–1231 (HPLLGARSVE…CTSLLRPGPS (297 aa)) is the PKS/mFAS DH domain. The Proton acceptor; for dehydratase activity role is filled by His-967. A C-terminal hotdog fold region spans residues 1084-1231 (LTSVDMERFY…CTSLLRPGPS (148 aa)). Residue Asp-1141 is the Proton donor; for dehydratase activity of the active site. The C-methyltransferase (CMeT) domain stretch occupies residues 1350–1584 (VGENLPAVVR…YMTSVMLSQA (235 aa)). The segment at 2092-2266 (TYLLIGFTGG…AASVMHIGMV (175 aa)) is ketoreductase (KR) domain 1. The Carrier 1 domain maps to 2372 to 2449 (EILAVVEEEF…ELCSTVVSHL (78 aa)). Ser-2409 is subject to O-(pantetheine 4'-phosphoryl)serine. Positions 2482 to 2511 (ASPTENEPFTIRNSPNSTQVTSESGVDEET) are disordered. A compositionally biased stretch (polar residues) spans 2486 to 2505 (ENEPFTIRNSPNSTQVTSES). A condensation region spans residues 2522-2806 (PLSFAQERLW…VNLLPLRLKL (285 aa)). Residues 2973–3385 (FEKCVVNQPD…RIAGDSQIKL (413 aa)) are adenylation. A Carrier 2 domain is found at 3493 to 3570 (KPLTETQERL…EMAAKIDGFT (78 aa)). O-(pantetheine 4'-phosphoryl)serine is present on Ser-3530. The segment at 3612 to 3833 (LTGATGFLGV…DFVPVDVVAA (222 aa)) is thiolester reductase (R) domain.

In the C-terminal section; belongs to the NRP synthetase family.

It functions in the pathway mycotoxin biosynthesis. In terms of biological role, fusarin C synthetase; part of the gene cluster that mediates the biosynthesis of the mycotoxin fusarin C. Within the cluster, FUS1, FUS2, FUS8 and FUS9 are sufficient for fusarin production. The roles of the other FUS members are yet undetermined. The fusarin C synthetase FUS1 is responsible for the condensation of one acetyl-coenzyme A (CoA) unit with six malonyl-CoA units and the amide linkage of the arising heptaketide and homoserine, subsequently releasing the first intermediate, prefusarin, as an alcohol with an open ring structure. The cytochrome P450 monooxygenase FUS8 participates in multiple oxidation processes at carbon C-20 and is able to use the FUS1 product as substrate, resulting in formation of 20-hydroxy-prefusarin. This reaction seems to be essential before the 2-pyrrolidone ring closure can be catalyzed by FUS2, generating 20-hydroxy-fusarin. FUS8 is able to further oxidizes carbon C-20 after ring closure, resulting in the formation of carboxy-fusarin C. As the last step, FUS9 methylates the hydroxyl group at C-21 to generate fusarin C. Fusarin C can then rearrange to epi-fusarin C, the (z)-isomers, and fusarin A and fusarin D. This is Fusarin C synthetase from Gibberella moniliformis (strain M3125 / FGSC 7600) (Maize ear and stalk rot fungus).